Reading from the N-terminus, the 598-residue chain is Aspartate--tRNA(Asp/Asn) ligase (598 aa).

L-aspartate is bound at residue glutamate 174. The interval glutamine 198–lysine 201 is aspartate. Arginine 220 contacts L-aspartate. ATP is bound by residues arginine 220 to glutamate 222 and glutamine 229. Histidine 458 lines the L-aspartate pocket. Glutamate 492 contributes to the ATP binding site. Arginine 499 is a binding site for L-aspartate. ATP is bound at residue glycine 544–arginine 547.

This sequence belongs to the class-II aminoacyl-tRNA synthetase family. Type 1 subfamily. As to quaternary structure, homodimer.

Its subcellular location is the cytoplasm. The catalysed reaction is tRNA(Asx) + L-aspartate + ATP = L-aspartyl-tRNA(Asx) + AMP + diphosphate. In terms of biological role, aspartyl-tRNA synthetase with relaxed tRNA specificity since it is able to aspartylate not only its cognate tRNA(Asp) but also tRNA(Asn). Reaction proceeds in two steps: L-aspartate is first activated by ATP to form Asp-AMP and then transferred to the acceptor end of tRNA(Asp/Asn). This is Aspartate--tRNA(Asp/Asn) ligase from Dehalococcoides mccartyi (strain ATCC BAA-2100 / JCM 16839 / KCTC 5957 / BAV1).